The sequence spans 158 residues: D-aminoacyl-tRNA deacylase (158 aa).

The Gly-cisPro motif, important for rejection of L-amino acids motif lies at 144-145 (GP).

It belongs to the DTD family. Homodimer.

The protein localises to the cytoplasm. The enzyme catalyses glycyl-tRNA(Ala) + H2O = tRNA(Ala) + glycine + H(+). It carries out the reaction a D-aminoacyl-tRNA + H2O = a tRNA + a D-alpha-amino acid + H(+). In terms of biological role, an aminoacyl-tRNA editing enzyme that deacylates mischarged D-aminoacyl-tRNAs. Also deacylates mischarged glycyl-tRNA(Ala), protecting cells against glycine mischarging by AlaRS. Acts via tRNA-based rather than protein-based catalysis; rejects L-amino acids rather than detecting D-amino acids in the active site. By recycling D-aminoacyl-tRNA to D-amino acids and free tRNA molecules, this enzyme counteracts the toxicity associated with the formation of D-aminoacyl-tRNA entities in vivo and helps enforce protein L-homochirality. The chain is D-aminoacyl-tRNA deacylase from Corynebacterium kroppenstedtii (strain DSM 44385 / JCM 11950 / CIP 105744 / CCUG 35717).